The primary structure comprises 262 residues: Serine O-acetyltransferase (262 aa).

Catalysis depends on Cys107, which acts as the Acyl-thioester intermediate. Lys128 provides a ligand contact to substrate. The active-site Proton acceptor is His200. Glu202 is an active-site residue. A substrate-binding site is contributed by Arg214.

Belongs to the MetA family.

Its subcellular location is the cytoplasm. The catalysed reaction is L-serine + acetyl-CoA = O-acetyl-L-serine + CoA. It catalyses the reaction L-homoserine + acetyl-CoA = O-acetyl-L-homoserine + CoA. It participates in amino-acid biosynthesis; L-cysteine biosynthesis; L-cysteine from L-serine: step 1/2. In terms of biological role, transfers an acetyl group from acetyl-CoA to L-serine, forming acetyl-L-serine. In vitro, also has homoserine acetyl transferase activity. The protein is Serine O-acetyltransferase of Lactobacillus acidophilus.